A 684-amino-acid polypeptide reads, in one-letter code: Cyclic nucleotide-gated channel alpha-1 (684 aa).

At 1 to 161 (MKTNIINTWH…PSGNTYYNWL (161 aa)) the chain is on the cytoplasmic side. The disordered stretch occupies residues 34–145 (ACSSFSDDDN…TKEKKEEEKK (112 aa)). Over residues 39–54 (SDDDNGSLSEESENED) the composition is skewed to acidic residues. Positions 105–145 (SKADDKNENKKDPEKKKKKEKEKEKKKKEEKTKEKKEEEKK) are enriched in basic and acidic residues. Residues 162 to 183 (FCITLPVMYNWTMIIARACFDE) form a helical membrane-spanning segment. Residues 184–193 (LQSDYLEYWL) lie on the Extracellular side of the membrane. Residues 194 to 214 (IFDYVSDVVYLADMFVRTRTG) form a helical membrane-spanning segment. The Cytoplasmic portion of the chain corresponds to 215 to 239 (YLEQGLLVKDRMKLIEKYKANLQFK). The chain crosses the membrane as a helical span at residues 240–258 (LDVLSVIPTDLLYIKFGWN). At 259–263 (YPEIR) the chain is on the extracellular side. A helical membrane pass occupies residues 264–282 (LNRLLRISRMFEFFQRTET). Residues 283-289 (RTNYPNI) are Cytoplasmic-facing. Residues 287–395 (PNIFRISNLV…GNIGSMISNM (109 aa)) are ion conduction pathway. The helical transmembrane segment at 290–313 (FRISNLVMYIVIIIHWNACVYYSI) threads the bilayer. Residues 314 to 336 (SKAIGFGNDTWVYPDVNDPEFGR) are Extracellular-facing. N321 carries an N-linked (GlcNAc...) asparagine glycan. 2 helical membrane-spanning segments follow: residues 337–371 (LARK…IFVV) and 372–396 (VDFL…SNMN). Residues 354-357 (TIGE) form a selectivity filter region. A C-linker region spans residues 397–473 (AARAEFQSRV…DTLKKVRIFA (77 aa)). Over 397–684 (AARAEFQSRV…ESELTESLQD (288 aa)) the chain is Cytoplasmic. Positions 477–597 (AGLLVELVLK…EEKGRQILMK (121 aa)) are cyclic nucleotide-binding domain. Residues G537, S540, R553, and T554 each coordinate 3',5'-cyclic GMP. Positions 553 and 554 each coordinate 3',5'-cyclic AMP. Residues 615 to 669 (LEEKVTRMEGSVDLLQTRFARILAEYESMQQKLKQRLTKVEKFLKPLIETEFSAL) adopt a coiled-coil conformation.

The protein belongs to the cyclic nucleotide-gated cation channel (TC 1.A.1.5) family. CNGA1 subfamily. Forms heterotetrameric channels composed of CNGA1 and CNGB1 subunits with 3:1 stoichiometry. May also form cyclic nucleotide-activated homotetrameric channels, that are efficiently activated by saturating cGMP, but poorly activated by saturating cAMP compared to the heterotetramer with CNGB1. The channel binds Ca(2+)-bound CALM1 via CaM1 and CaM2 regions of the CNGB1 subunit; this interaction modulates the affinity of the channel for cNMPs in response to intracellular Ca(2+) levels. In terms of tissue distribution, rod cells in the retina and inner medulla of kidney.

It localises to the cell membrane. It carries out the reaction Ca(2+)(in) = Ca(2+)(out). The catalysed reaction is Na(+)(in) = Na(+)(out). It catalyses the reaction K(+)(in) = K(+)(out). The enzyme catalyses NH4(+)(in) = NH4(+)(out). It carries out the reaction Rb(+)(in) = Rb(+)(out). The catalysed reaction is Li(+)(in) = Li(+)(out). It catalyses the reaction Cs(+)(in) = Cs(+)(out). Functionally, pore-forming subunit of the rod cyclic nucleotide-gated channel. Mediates rod photoresponses at dim light converting transient changes in intracellular cGMP levels into electrical signals. In the dark, cGMP levels are high and keep the channel open enabling a steady inward current carried by Na(+) and Ca(2+) ions that leads to membrane depolarization and neurotransmitter release from synaptic terminals. Upon photon absorption cGMP levels decline leading to channel closure and membrane hyperpolarization that ultimately slows neurotransmitter release and signals the presence of light, the end point of the phototransduction cascade. Conducts cGMP- and cAMP-gated ion currents, with permeability for monovalent and divalent cations. The selectivity for Ca(2+) over Na(+) increases with cGMP concentrations, whereas the selectivity among monovalent ions is independent of the cGMP levels. This Mus musculus (Mouse) protein is Cyclic nucleotide-gated channel alpha-1 (Cnga1).